The primary structure comprises 1205 residues: cGMP-specific 3',5'-cyclic phosphodiesterase (1205 aa).

The segment at 1 to 153 (MTDVSSPAGG…TKASTTASQQ (153 aa)) is disordered. A compositionally biased stretch (low complexity) spans 18-32 (TTSSSPAATTSASSS). Positions 33 to 48 (KPLTNGANKTTISTTA) are enriched in polar residues. Over residues 62 to 71 (GAIPASSSSG) the composition is skewed to low complexity. The segment covering 83 to 94 (SNNNRPAATNRS) has biased composition (polar residues). Residues 118 to 140 (SSSSPSQSPSQTQASIQTQTSQQ) show a composition bias toward low complexity. GAF domains follow at residues 259–411 (DIDV…GIGI) and 443–624 (NLEC…GLGI). In terms of domain architecture, PDEase spans 654–1052 (SQDQTEKLTQ…RNWQDLAEKV (399 aa)). Catalysis depends on His730, which acts as the Proton donor. Residues His734, His770, Asp771, and Asp956 each coordinate a divalent metal cation. Disordered stretches follow at residues 1093 to 1122 (QQSQ…TGAL) and 1152 to 1205 (SHVS…CALL). 2 stretches are compositionally biased toward basic and acidic residues: residues 1098 to 1109 (GSEDSHTPEHQR) and 1152 to 1162 (SHVSEDMDDKS). A compositionally biased stretch (low complexity) spans 1171 to 1191 (ASGSMGRMSASSSTSSAGGQM). Positions 1195–1205 (SKKRSKLCALL) are enriched in basic residues. Cysteine methyl ester is present on Cys1202. A lipid anchor (S-farnesyl cysteine) is attached at Cys1202. A propeptide spans 1203–1205 (ALL) (removed in mature form).

Belongs to the cyclic nucleotide phosphodiesterase family. In terms of assembly, interacts with PrBP. A divalent metal cation serves as cofactor.

The protein localises to the cell membrane. It catalyses the reaction 3',5'-cyclic GMP + H2O = GMP + H(+). In terms of biological role, has a role regulating cGMP transport in Malpighian tubule principal cells. The chain is cGMP-specific 3',5'-cyclic phosphodiesterase from Drosophila sechellia (Fruit fly).